The sequence spans 212 residues: Pyridoxine/pyridoxamine 5'-phosphate oxidase (212 aa).

FMN is bound by residues R57–K62, Y72–T73, R78, K79, and Q101. K62 contacts substrate. The substrate site is built by Y119, R123, and S127. FMN is bound by residues Q136–S137 and W181. Residue R187 to H189 coordinates substrate. R191 contributes to the FMN binding site.

Belongs to the pyridoxamine 5'-phosphate oxidase family. As to quaternary structure, homodimer. It depends on FMN as a cofactor.

The enzyme catalyses pyridoxamine 5'-phosphate + O2 + H2O = pyridoxal 5'-phosphate + H2O2 + NH4(+). The catalysed reaction is pyridoxine 5'-phosphate + O2 = pyridoxal 5'-phosphate + H2O2. It participates in cofactor metabolism; pyridoxal 5'-phosphate salvage; pyridoxal 5'-phosphate from pyridoxamine 5'-phosphate: step 1/1. It functions in the pathway cofactor metabolism; pyridoxal 5'-phosphate salvage; pyridoxal 5'-phosphate from pyridoxine 5'-phosphate: step 1/1. Functionally, catalyzes the oxidation of either pyridoxine 5'-phosphate (PNP) or pyridoxamine 5'-phosphate (PMP) into pyridoxal 5'-phosphate (PLP). This is Pyridoxine/pyridoxamine 5'-phosphate oxidase from Erythrobacter litoralis (strain HTCC2594).